Here is a 445-residue protein sequence, read N- to C-terminus: Exodeoxyribonuclease 7 large subunit (445 aa).

The protein belongs to the XseA family. As to quaternary structure, heterooligomer composed of large and small subunits.

The protein resides in the cytoplasm. It catalyses the reaction Exonucleolytic cleavage in either 5'- to 3'- or 3'- to 5'-direction to yield nucleoside 5'-phosphates.. Functionally, bidirectionally degrades single-stranded DNA into large acid-insoluble oligonucleotides, which are then degraded further into small acid-soluble oligonucleotides. The sequence is that of Exodeoxyribonuclease 7 large subunit from Xanthomonas oryzae pv. oryzae (strain KACC10331 / KXO85).